We begin with the raw amino-acid sequence, 211 residues long: Molybdenum cofactor guanylyltransferase (211 aa).

GTP is bound by residues 12–14 (LAG), Lys-25, Asn-53, Asp-71, and Asp-101. Asp-101 is a Mg(2+) binding site.

It belongs to the MobA family. In terms of assembly, monomer. Requires Mg(2+) as cofactor.

The protein localises to the cytoplasm. The enzyme catalyses Mo-molybdopterin + GTP + H(+) = Mo-molybdopterin guanine dinucleotide + diphosphate. Its function is as follows. Transfers a GMP moiety from GTP to Mo-molybdopterin (Mo-MPT) cofactor (Moco or molybdenum cofactor) to form Mo-molybdopterin guanine dinucleotide (Mo-MGD) cofactor. This chain is Molybdenum cofactor guanylyltransferase, found in Acidovorax sp. (strain JS42).